Here is a 253-residue protein sequence, read N- to C-terminus: PAXIP1-associated glutamate-rich protein 1A (253 aa).

Disordered stretches follow at residues 1–108 and 126–253; these read MSLA…MPPP and LQAE…QRKY. The segment covering 45–66 has biased composition (basic and acidic residues); sequence KAEEEGKGSQEEAGREGSRPEE. Positions 115–159 are sufficient for interaction with NCOA1; that stretch reads YELLATQGTLELQAEILPRRPPTPEAQSEEERSDEEPEAKEEEEE. At Thr137 the chain carries Phosphothreonine. Over residues 141–158 the composition is skewed to acidic residues; it reads QSEEERSDEEPEAKEEEE. Ser142 and Ser147 each carry phosphoserine. The sufficient for interaction with ESR1 stretch occupies residues 160–253; sequence KPHMPTEFDF…NSLFPRQRKY (94 aa). The span at 194–222 shows a compositional bias: basic and acidic residues; that stretch reads QKREARLDKVLSDMKRHKKLEEQILRTGR. The residue at position 236 (Ser236) is a Phosphoserine. The segment covering 238–247 has biased composition (polar residues); the sequence is PLRSSGNSLF.

In terms of assembly, component of the KMT2 family MLL2/MLL3 complex, at least composed of the histone methyltransferases KMT2D and/or KMT2C, the common subunits ASH2L, RBBP5, WDR5 and DPY30, and the complex type-specific subunits PAXIP1/PTIP, PAGR1, NCOA6 and KDM6A; PAXIP1 is required for the association with the MLL2/MLL3 complex. Forms a constitutive complex with PAXIP1/PTIP independently of the MLL2/MLL3 complex. Interacts with NCOA1, ESR1, NR3C1, AR.

Its subcellular location is the nucleus. Functionally, its association with the histone methyltransferase MLL2/MLL3 complex is suggesting a role in epigenetic transcriptional activation. However, in association with PAXIP1/PTIP is proposed to function at least in part independently of the MLL2/MLL3 complex. Proposed to be recruited by PAXIP1 to sites of DNA damage where the PAGR1:PAXIP1 complex is required for cell survival in response to DNA damage independently of the MLL2/MLL3 complex. However, its function in DNA damage has been questioned. During immunoglobulin class switching in activated B-cells is involved in transcription regulation of downstream switch regions at the immunoglobulin heavy-chain (Igh) locus independently of the MLL2/MLL3 complex. Involved in both estrogen receptor-regulated gene transcription and estrogen-stimulated G1/S cell-cycle transition. Acts as a transcriptional cofactor for nuclear hormone receptors. Inhibits the induction properties of several steroid receptors such as NR3C1, AR and PPARG; the mechanism of inhibition appears to be gene-dependent. May be involved in the regulation of the BMP pathway in extraembryonic development. The polypeptide is PAXIP1-associated glutamate-rich protein 1A (Mus musculus (Mouse)).